A 190-amino-acid polypeptide reads, in one-letter code: Isopentenyl-diphosphate Delta-isomerase (190 aa).

Mn(2+) is bound by residues H27 and H34. The region spanning 32-166 is the Nudix hydrolase domain; it reads ALHLAFSCHV…PWAFSPWLTL (135 aa). Residue C69 is part of the active site. Residue H71 participates in Mn(2+) binding. E89 is a binding site for Mg(2+). Positions 116 and 118 each coordinate Mn(2+). E118 is an active-site residue.

The protein belongs to the IPP isomerase type 1 family. It depends on Mg(2+) as a cofactor. Mn(2+) serves as cofactor.

Its subcellular location is the cytoplasm. The catalysed reaction is isopentenyl diphosphate = dimethylallyl diphosphate. The protein operates within isoprenoid biosynthesis; dimethylallyl diphosphate biosynthesis; dimethylallyl diphosphate from isopentenyl diphosphate: step 1/1. Functionally, catalyzes the 1,3-allylic rearrangement of the homoallylic substrate isopentenyl (IPP) to its highly electrophilic allylic isomer, dimethylallyl diphosphate (DMAPP). The protein is Isopentenyl-diphosphate Delta-isomerase of Clavibacter sepedonicus (Clavibacter michiganensis subsp. sepedonicus).